A 427-amino-acid polypeptide reads, in one-letter code: L-threonine dehydratase biosynthetic IlvA (427 aa).

N6-(pyridoxal phosphate)lysine is present on Lys63. Pyridoxal 5'-phosphate-binding positions include Asn90, 193-197 (GGGGC), and Ser319. The region spanning 343-417 (HYFLVDFPQK…TEMHVETLQP (75 aa)) is the ACT-like domain.

Belongs to the serine/threonine dehydratase family. Homotetramer. It depends on pyridoxal 5'-phosphate as a cofactor.

It carries out the reaction L-threonine = 2-oxobutanoate + NH4(+). The protein operates within amino-acid biosynthesis; L-isoleucine biosynthesis; 2-oxobutanoate from L-threonine: step 1/1. In terms of biological role, catalyzes the anaerobic formation of alpha-ketobutyrate and ammonia from threonine in a two-step reaction. The first step involved a dehydration of threonine and a production of enamine intermediates (aminocrotonate), which tautomerizes to its imine form (iminobutyrate). Both intermediates are unstable and short-lived. The second step is the nonenzymatic hydrolysis of the enamine/imine intermediates to form 2-ketobutyrate and free ammonia. In the low water environment of the cell, the second step is accelerated by RidA. This chain is L-threonine dehydratase biosynthetic IlvA (ilvA), found in Mycobacterium leprae (strain TN).